The sequence spans 442 residues: Tubulin beta chain (442 aa).

Residues Q11, E69, S138, G142, T143, G144, N204, and N226 each contribute to the GTP site. A Mg(2+)-binding site is contributed by E69.

This sequence belongs to the tubulin family. As to quaternary structure, dimer of alpha and beta chains. A typical microtubule is a hollow water-filled tube with an outer diameter of 25 nm and an inner diameter of 15 nM. Alpha-beta heterodimers associate head-to-tail to form protofilaments running lengthwise along the microtubule wall with the beta-tubulin subunit facing the microtubule plus end conferring a structural polarity. Microtubules usually have 13 protofilaments but different protofilament numbers can be found in some organisms and specialized cells. Mg(2+) is required as a cofactor.

The protein localises to the cytoplasm. The protein resides in the cytoskeleton. Functionally, tubulin is the major constituent of microtubules, a cylinder consisting of laterally associated linear protofilaments composed of alpha- and beta-tubulin heterodimers. Microtubules grow by the addition of GTP-tubulin dimers to the microtubule end, where a stabilizing cap forms. Below the cap, tubulin dimers are in GDP-bound state, owing to GTPase activity of alpha-tubulin. The sequence is that of Tubulin beta chain (bPT2) from Paramecium tetraurelia.